The chain runs to 293 residues: Probable rRNA-processing protein EBP2 homolog (293 aa).

The span at 1-37 (MSLEEDIVSDDEMNMIDEDDATDSEAESLSDSDTENE) shows a compositional bias: acidic residues. Disordered stretches follow at residues 1–45 (MSLE…LAEP) and 150–293 (IEES…RQKR). Positions 135–190 (HMEKVKSRLLHEKKQIEESEERRKARDNKRMAKEVQSQKMKERAKEKKDNIESVKK) form a coiled coil. Basic and acidic residues-rich tracts occupy residues 150 to 167 (IEESEERRKARDNKRMAK), 173 to 189 (KMKERAKEKKDNIESVK), and 247 to 256 (KKREFRDSKF). Polar residues predominate over residues 265–275 (SKQNTAETTND).

The protein belongs to the EBP2 family. In terms of assembly, interacts with NSN1.

The protein localises to the nucleus. The protein resides in the nucleolus. Required for the processing of the 27S pre-rRNA. Plays an important role in plant growth and senescence by modulating ribosome biogenesis in nucleolus. Associates with ribosomes. This chain is Probable rRNA-processing protein EBP2 homolog, found in Arabidopsis thaliana (Mouse-ear cress).